A 326-amino-acid chain; its full sequence is Amino acid--[acyl-carrier-protein] ligase 1 (326 aa).

Position 131 (cysteine 131) interacts with Zn(2+). ATP contacts are provided by residues arginine 159, glutamate 161, and 168–169 (RL). Position 176 (glutamate 176) interacts with Zn(2+). Glutamate 176 is an an L-alpha-amino acid binding site. Residues lysine 235 and 250–253 (ACMS) contribute to the ATP site. Residue cysteine 279 participates in Zn(2+) binding. Arginine 286 contributes to the ATP binding site.

Belongs to the class-II aminoacyl-tRNA synthetase family. Amino acid--[acyl-carrier-protein] ligase subfamily. In terms of assembly, homodimer. Zn(2+) is required as a cofactor.

The catalysed reaction is an L-alpha-amino acid + holo-[ACP] + ATP = an L-alpha-aminoacyl-[ACP] + AMP + diphosphate. In terms of biological role, catalyzes the ATP-dependent activation of L-glycine and its transfer to the phosphopantetheine prosthetic group covalently attached to the vicinal carrier protein bsr0959 of yet unknown function. May participate in nonribosomal peptide synthesis or related processes. L-alanine is a poor substrate whereas L-serine or D-amino acids are not substrates for ATP-dependent activation. Does not display tRNA aminoacylation activity. This chain is Amino acid--[acyl-carrier-protein] ligase 1, found in Bradyrhizobium diazoefficiens (strain JCM 10833 / BCRC 13528 / IAM 13628 / NBRC 14792 / USDA 110).